Reading from the N-terminus, the 299-residue chain is Regucalcin (299 aa).

Glu-18 serves as a coordination point for a divalent metal cation. Substrate-binding residues include Arg-101, Asn-103, and Glu-121. A divalent metal cation contacts are provided by Asn-154 and Asp-204. The active-site Proton donor/acceptor is the Asp-204. 2 positions are modified to N6-succinyllysine: Lys-244 and Lys-253.

Belongs to the SMP-30/CGR1 family. Monomer. Zn(2+) serves as cofactor. The cofactor is Mn(2+). Ca(2+) is required as a cofactor. Requires Mg(2+) as cofactor.

The protein localises to the cytoplasm. It carries out the reaction D-glucono-1,5-lactone + H2O = D-gluconate + H(+). Its pathway is cofactor biosynthesis; L-ascorbate biosynthesis via UDP-alpha-D-glucuronate pathway; L-ascorbate from UDP-alpha-D-glucuronate: step 3/4. Its function is as follows. Gluconolactonase with low activity towards other sugar lactones, including gulonolactone and galactonolactone. Catalyzes a key step in ascorbic acid (vitamin C) biosynthesis. Can also hydrolyze diisopropyl phosphorofluoridate and phenylacetate (in vitro). Calcium-binding protein. Modulates Ca(2+) signaling, and Ca(2+)-dependent cellular processes and enzyme activities. In Sus scrofa (Pig), this protein is Regucalcin (RGN).